The primary structure comprises 232 residues: uncharacterized protein (232 aa).

The signal sequence occupies residues 1 to 18; sequence MGILKSLFTLGKSFISQA. The tract at residues 207–232 is disordered; that stretch reads AEAGIGGSNKSSAQDVLARLQRQQGE.

It belongs to the PspA/Vipp/IM30 family.

This is an uncharacterized protein from Escherichia coli O6:H1 (strain CFT073 / ATCC 700928 / UPEC).